The sequence spans 389 residues: S-adenosylmethionine synthase (389 aa).

ATP is bound at residue His-17. A Mg(2+)-binding site is contributed by Asp-19. Glu-45 provides a ligand contact to K(+). L-methionine contacts are provided by Glu-58 and Gln-101. Residues 101 to 111 (QSPDIGQGVDV) are flexible loop. Residues 160-162 (DGK), 226-227 (RF), Asp-235, 241-242 (RK), Ala-258, and Lys-262 each bind ATP. An L-methionine-binding site is contributed by Asp-235. Lys-266 contributes to the L-methionine binding site.

The protein belongs to the AdoMet synthase family. As to quaternary structure, homotetramer; dimer of dimers. Requires Mg(2+) as cofactor. It depends on K(+) as a cofactor.

The protein resides in the cytoplasm. The catalysed reaction is L-methionine + ATP + H2O = S-adenosyl-L-methionine + phosphate + diphosphate. It functions in the pathway amino-acid biosynthesis; S-adenosyl-L-methionine biosynthesis; S-adenosyl-L-methionine from L-methionine: step 1/1. Functionally, catalyzes the formation of S-adenosylmethionine (AdoMet) from methionine and ATP. The overall synthetic reaction is composed of two sequential steps, AdoMet formation and the subsequent tripolyphosphate hydrolysis which occurs prior to release of AdoMet from the enzyme. This chain is S-adenosylmethionine synthase, found in Anaeromyxobacter sp. (strain Fw109-5).